The sequence spans 139 residues: Holo-[acyl-carrier-protein] synthase (139 aa).

2 residues coordinate Mg(2+): aspartate 8 and glutamate 57.

It belongs to the P-Pant transferase superfamily. AcpS family. Requires Mg(2+) as cofactor.

It localises to the cytoplasm. The catalysed reaction is apo-[ACP] + CoA = holo-[ACP] + adenosine 3',5'-bisphosphate + H(+). Its function is as follows. Transfers the 4'-phosphopantetheine moiety from coenzyme A to a Ser of acyl-carrier-protein. This Sinorhizobium fredii (strain NBRC 101917 / NGR234) protein is Holo-[acyl-carrier-protein] synthase.